The primary structure comprises 197 residues: ATP-dependent Clp protease proteolytic subunit (197 aa).

The active-site Nucleophile is S98. H123 is a catalytic residue.

It belongs to the peptidase S14 family. As to quaternary structure, fourteen ClpP subunits assemble into 2 heptameric rings which stack back to back to give a disk-like structure with a central cavity, resembling the structure of eukaryotic proteasomes.

Its subcellular location is the cytoplasm. The enzyme catalyses Hydrolysis of proteins to small peptides in the presence of ATP and magnesium. alpha-casein is the usual test substrate. In the absence of ATP, only oligopeptides shorter than five residues are hydrolyzed (such as succinyl-Leu-Tyr-|-NHMec, and Leu-Tyr-Leu-|-Tyr-Trp, in which cleavage of the -Tyr-|-Leu- and -Tyr-|-Trp bonds also occurs).. Cleaves peptides in various proteins in a process that requires ATP hydrolysis. Has a chymotrypsin-like activity. Plays a major role in the degradation of misfolded proteins. The sequence is that of ATP-dependent Clp protease proteolytic subunit from Limosilactobacillus reuteri (strain DSM 20016) (Lactobacillus reuteri).